Here is a 142-residue protein sequence, read N- to C-terminus: MALGIKEIQEIIPHRYPFLLVDKVEELEPGKRAVGYKNVTMNEYFFQGHFPEEPVMPGVLQIEALAQLGAIALLSMDEFKGKIAYFGGINKAKFRRKVVPGDVLKLEIEIVKMKGPAGIGKAIATVDGEKAVECEIMFAVGK.

Residue histidine 49 is part of the active site.

It belongs to the thioester dehydratase family. FabZ subfamily.

Its subcellular location is the cytoplasm. The catalysed reaction is a (3R)-hydroxyacyl-[ACP] = a (2E)-enoyl-[ACP] + H2O. Involved in unsaturated fatty acids biosynthesis. Catalyzes the dehydration of short chain beta-hydroxyacyl-ACPs and long chain saturated and unsaturated beta-hydroxyacyl-ACPs. This is 3-hydroxyacyl-[acyl-carrier-protein] dehydratase FabZ from Clostridium novyi (strain NT).